The chain runs to 224 residues: Urease accessory protein UreF (224 aa).

Belongs to the UreF family. In terms of assembly, ureD, UreF and UreG form a complex that acts as a GTP-hydrolysis-dependent molecular chaperone, activating the urease apoprotein by helping to assemble the nickel containing metallocenter of UreC. The UreE protein probably delivers the nickel.

It is found in the cytoplasm. Functionally, required for maturation of urease via the functional incorporation of the urease nickel metallocenter. This is Urease accessory protein UreF from Methylorubrum populi (strain ATCC BAA-705 / NCIMB 13946 / BJ001) (Methylobacterium populi).